Consider the following 357-residue polypeptide: Ferrochelatase (357 aa).

Fe cation contacts are provided by His-193 and Glu-272.

This sequence belongs to the ferrochelatase family.

The protein localises to the cytoplasm. The enzyme catalyses heme b + 2 H(+) = protoporphyrin IX + Fe(2+). Its pathway is porphyrin-containing compound metabolism; protoheme biosynthesis; protoheme from protoporphyrin-IX: step 1/1. Its function is as follows. Catalyzes the ferrous insertion into protoporphyrin IX. The polypeptide is Ferrochelatase (Hyphomonas neptunium (strain ATCC 15444)).